Reading from the N-terminus, the 379-residue chain is uncharacterized protein (379 aa).

This sequence belongs to the herpesviridae US22 family.

This is an uncharacterized protein from Human cytomegalovirus (strain AD169) (HHV-5).